A 420-amino-acid polypeptide reads, in one-letter code: Serine hydroxymethyltransferase (420 aa).

(6S)-5,6,7,8-tetrahydrofolate contacts are provided by residues leucine 121 and 125 to 127 (GHL). The residue at position 230 (lysine 230) is an N6-(pyridoxal phosphate)lysine. (6S)-5,6,7,8-tetrahydrofolate is bound by residues glutamate 246 and 354-356 (SPF).

Belongs to the SHMT family. Homodimer. Pyridoxal 5'-phosphate serves as cofactor.

It localises to the cytoplasm. The enzyme catalyses (6R)-5,10-methylene-5,6,7,8-tetrahydrofolate + glycine + H2O = (6S)-5,6,7,8-tetrahydrofolate + L-serine. The protein operates within one-carbon metabolism; tetrahydrofolate interconversion. Its pathway is amino-acid biosynthesis; glycine biosynthesis; glycine from L-serine: step 1/1. Functionally, catalyzes the reversible interconversion of serine and glycine with tetrahydrofolate (THF) serving as the one-carbon carrier. This reaction serves as the major source of one-carbon groups required for the biosynthesis of purines, thymidylate, methionine, and other important biomolecules. Also exhibits THF-independent aldolase activity toward beta-hydroxyamino acids, producing glycine and aldehydes, via a retro-aldol mechanism. The chain is Serine hydroxymethyltransferase from Rickettsia prowazekii (strain Madrid E).